Consider the following 511-residue polypeptide: 2,3-bisphosphoglycerate-independent phosphoglycerate mutase (511 aa).

Asp-12 is a Mn(2+) binding site. Residue Tyr-36 is modified to Phosphotyrosine. Position 62 (Ser-62) interacts with Mn(2+). Ser-62 acts as the Phosphoserine intermediate in catalysis. Substrate contacts are provided by residues His-123, 153–154, Arg-185, Arg-191, 261–264, and Lys-336; these read RD and RPDR. Positions 403, 407, 444, 445, and 462 each coordinate Mn(2+).

The protein belongs to the BPG-independent phosphoglycerate mutase family. Monomer. Requires Mn(2+) as cofactor.

It catalyses the reaction (2R)-2-phosphoglycerate = (2R)-3-phosphoglycerate. Its pathway is carbohydrate degradation; glycolysis; pyruvate from D-glyceraldehyde 3-phosphate: step 3/5. Functionally, catalyzes the interconversion of 2-phosphoglycerate and 3-phosphoglycerate. This is 2,3-bisphosphoglycerate-independent phosphoglycerate mutase from Geobacillus kaustophilus (strain HTA426).